The sequence spans 398 residues: 1-deoxy-D-xylulose 5-phosphate reductoisomerase (398 aa).

Positions 11, 12, 13, 14, 38, 39, and 125 each coordinate NADPH. Lys126 lines the 1-deoxy-D-xylulose 5-phosphate pocket. Residue Glu127 participates in NADPH binding. Asp151 is a binding site for Mn(2+). 1-deoxy-D-xylulose 5-phosphate is bound by residues Ser152, Glu153, Ser179, and His202. Glu153 is a Mn(2+) binding site. Residue Gly208 coordinates NADPH. 4 residues coordinate 1-deoxy-D-xylulose 5-phosphate: Ser215, Asn220, Lys221, and Glu224. Glu224 contributes to the Mn(2+) binding site.

Belongs to the DXR family. It depends on Mg(2+) as a cofactor. Mn(2+) is required as a cofactor.

The enzyme catalyses 2-C-methyl-D-erythritol 4-phosphate + NADP(+) = 1-deoxy-D-xylulose 5-phosphate + NADPH + H(+). It participates in isoprenoid biosynthesis; isopentenyl diphosphate biosynthesis via DXP pathway; isopentenyl diphosphate from 1-deoxy-D-xylulose 5-phosphate: step 1/6. Catalyzes the NADPH-dependent rearrangement and reduction of 1-deoxy-D-xylulose-5-phosphate (DXP) to 2-C-methyl-D-erythritol 4-phosphate (MEP). In Burkholderia vietnamiensis (strain G4 / LMG 22486) (Burkholderia cepacia (strain R1808)), this protein is 1-deoxy-D-xylulose 5-phosphate reductoisomerase.